A 584-amino-acid chain; its full sequence is Glutathione hydrolase proenzyme (584 aa).

An N-terminal signal peptide occupies residues 1 to 25 (MAPAAMNLLCTVLYLLSSFAQVSDA). The N-linked (GlcNAc...) asparagine glycan is linked to Asn-111. Arg-120 contacts L-glutamate. 5 N-linked (GlcNAc...) asparagine glycosylation sites follow: Asn-135, Asn-262, Asn-272, Asn-350, and Asn-370. The active-site Nucleophile is the Thr-395. Residues Thr-413, Glu-434, and 465 to 466 (SS) each bind L-glutamate. The N-linked (GlcNAc...) asparagine glycan is linked to Asn-547.

It belongs to the gamma-glutamyltransferase family. Heterodimer composed of the light and heavy chains. The active site is located in the light chain. In terms of processing, cleaved by autocatalysis into a large and a small subunit and the autocatalytic cleavage is essential to the functional activation of the enzyme.

The protein localises to the secreted. The enzyme catalyses an N-terminal (5-L-glutamyl)-[peptide] + an alpha-amino acid = 5-L-glutamyl amino acid + an N-terminal L-alpha-aminoacyl-[peptide]. It catalyses the reaction glutathione + H2O = L-cysteinylglycine + L-glutamate. The catalysed reaction is an S-substituted glutathione + H2O = an S-substituted L-cysteinylglycine + L-glutamate. It carries out the reaction leukotriene C4 + H2O = leukotriene D4 + L-glutamate. It functions in the pathway sulfur metabolism; glutathione metabolism. Its function is as follows. Cleaves the gamma-glutamyl bond of extracellular glutathione (gamma-Glu-Cys-Gly), glutathione conjugates, and other gamma-glutamyl compounds. The metabolism of glutathione releases free glutamate and the dipeptide cysteinyl-glycine, which is hydrolyzed to cysteine and glycine by dipeptidases. In the presence of high concentrations of dipeptides and some amino acids, can also catalyze a transpeptidation reaction, transferring the gamma-glutamyl moiety to an acceptor amino acid to form a new gamma-glutamyl compound. Initiates extracellular glutathione (GSH) breakdown, provides cells with a local cysteine supply and contributes to maintain intracellular GSH level. It is part of the cell antioxidant defense mechanism. The sequence is that of Glutathione hydrolase proenzyme from Arthroderma benhamiae (strain ATCC MYA-4681 / CBS 112371) (Trichophyton mentagrophytes).